The sequence spans 311 residues: Olfactory receptor 6B1 (311 aa).

Residues methionine 1 to alanine 25 are Extracellular-facing. Asparagine 5 carries N-linked (GlcNAc...) asparagine glycosylation. Residues alanine 26–isoleucine 46 form a helical membrane-spanning segment. Over leucine 47–proline 54 the chain is Cytoplasmic. Residues leucine 55 to serine 75 traverse the membrane as a helical segment. The Extracellular portion of the chain corresponds to valine 76–isoleucine 99. A disulfide bridge connects residues cysteine 97 and cysteine 189. Residues glutamine 100–tyrosine 120 traverse the membrane as a helical segment. Topologically, residues aspartate 121–glycine 139 are cytoplasmic. The chain crosses the membrane as a helical span at residues leucine 140 to isoleucine 160. The Extracellular segment spans residues tyrosine 161–glutamate 196. The helical transmembrane segment at leucine 197–serine 217 threads the bilayer. Topologically, residues tyrosine 218–alanine 235 are cytoplasmic. The helical transmembrane segment at phenylalanine 236 to methionine 256 threads the bilayer. Residues tyrosine 257 to asparagine 269 lie on the Extracellular side of the membrane. The helical transmembrane segment at lysine 270–leucine 290 threads the bilayer. Over arginine 291 to aspartate 311 the chain is Cytoplasmic.

Belongs to the G-protein coupled receptor 1 family.

It is found in the cell membrane. Odorant receptor. The protein is Olfactory receptor 6B1 (OR6B1) of Homo sapiens (Human).